Reading from the N-terminus, the 475-residue chain is Sulfate adenylyltransferase subunit 1 (475 aa).

The 215-residue stretch at 25–239 (KSLLRFLTCG…EVLETVEIQR (215 aa)) folds into the tr-type G domain. The segment at 34-41 (GSVDDGKS) is G1. A GTP-binding site is contributed by 34-41 (GSVDDGKS). The interval 92 to 96 (GITID) is G2. Residues 113–116 (DTPG) are G3. GTP is bound by residues 113–117 (DTPGH) and 168–171 (NKMD). Residues 168 to 171 (NKMD) form a G4 region. The tract at residues 206-208 (SAL) is G5.

This sequence belongs to the TRAFAC class translation factor GTPase superfamily. Classic translation factor GTPase family. CysN/NodQ subfamily. Heterodimer composed of CysD, the smaller subunit, and CysN.

The enzyme catalyses sulfate + ATP + H(+) = adenosine 5'-phosphosulfate + diphosphate. It participates in sulfur metabolism; hydrogen sulfide biosynthesis; sulfite from sulfate: step 1/3. Its function is as follows. With CysD forms the ATP sulfurylase (ATPS) that catalyzes the adenylation of sulfate producing adenosine 5'-phosphosulfate (APS) and diphosphate, the first enzymatic step in sulfur assimilation pathway. APS synthesis involves the formation of a high-energy phosphoric-sulfuric acid anhydride bond driven by GTP hydrolysis by CysN coupled to ATP hydrolysis by CysD. This is Sulfate adenylyltransferase subunit 1 from Escherichia fergusonii (strain ATCC 35469 / DSM 13698 / CCUG 18766 / IAM 14443 / JCM 21226 / LMG 7866 / NBRC 102419 / NCTC 12128 / CDC 0568-73).